The following is a 299-amino-acid chain: 4-diphosphocytidyl-2-C-methyl-D-erythritol kinase (299 aa).

Lys20 is a catalytic residue. 106 to 116 (PMGGGLGGGSS) is a binding site for ATP. The active site involves Asp148.

This sequence belongs to the GHMP kinase family. IspE subfamily. In terms of assembly, homodimer.

The catalysed reaction is 4-CDP-2-C-methyl-D-erythritol + ATP = 4-CDP-2-C-methyl-D-erythritol 2-phosphate + ADP + H(+). It functions in the pathway isoprenoid biosynthesis; isopentenyl diphosphate biosynthesis via DXP pathway; isopentenyl diphosphate from 1-deoxy-D-xylulose 5-phosphate: step 3/6. In terms of biological role, catalyzes the phosphorylation of the position 2 hydroxy group of 4-diphosphocytidyl-2C-methyl-D-erythritol. The sequence is that of 4-diphosphocytidyl-2-C-methyl-D-erythritol kinase from Yersinia pseudotuberculosis serotype O:1b (strain IP 31758).